A 106-amino-acid polypeptide reads, in one-letter code: Large ribosomal subunit protein uL24 (106 aa).

The protein belongs to the universal ribosomal protein uL24 family. In terms of assembly, part of the 50S ribosomal subunit.

Its function is as follows. One of two assembly initiator proteins, it binds directly to the 5'-end of the 23S rRNA, where it nucleates assembly of the 50S subunit. Functionally, one of the proteins that surrounds the polypeptide exit tunnel on the outside of the subunit. The polypeptide is Large ribosomal subunit protein uL24 (Thermosipho melanesiensis (strain DSM 12029 / CIP 104789 / BI429)).